Here is a 257-residue protein sequence, read N- to C-terminus: Dihydroorotate dehydrogenase B (NAD(+)), electron transfer subunit (257 aa).

In terms of domain architecture, FAD-binding FR-type spans 2-102 (IGRERMTVAS…LGPLGNGFPL (101 aa)). FAD contacts are provided by residues 53–56 (RPLS), 70–72 (IYR), and 77–78 (GT). Positions 221, 226, 229, and 244 each coordinate [2Fe-2S] cluster.

The protein belongs to the PyrK family. As to quaternary structure, heterotetramer of 2 PyrK and 2 PyrD type B subunits. The cofactor is [2Fe-2S] cluster. Requires FAD as cofactor.

It functions in the pathway pyrimidine metabolism; UMP biosynthesis via de novo pathway; orotate from (S)-dihydroorotate (NAD(+) route): step 1/1. Its function is as follows. Responsible for channeling the electrons from the oxidation of dihydroorotate from the FMN redox center in the PyrD type B subunit to the ultimate electron acceptor NAD(+). The polypeptide is Dihydroorotate dehydrogenase B (NAD(+)), electron transfer subunit (Geobacillus kaustophilus (strain HTA426)).